We begin with the raw amino-acid sequence, 65 residues long: Large ribosomal subunit protein bL35 (65 aa).

The interval 1–25 (MPKMKSHRGAAKRFKKTGTGKLKRA) is disordered.

The protein belongs to the bacterial ribosomal protein bL35 family.

The polypeptide is Large ribosomal subunit protein bL35 (Clostridium botulinum (strain Eklund 17B / Type B)).